Here is a 171-residue protein sequence, read N- to C-terminus: Zinc uptake regulation protein (171 aa).

The protein belongs to the Fur family.

Acts as a negative controlling element, employing Zn(2+) as a cofactor to bind the operator of the repressed genes (znuACB). In Escherichia coli (strain K12), this protein is Zinc uptake regulation protein (zur).